The primary structure comprises 383 residues: Probable cell wall hydrolase LytN (383 aa).

An N-terminal signal peptide occupies residues 1–49 (MFIYYCKECSIMNKQQSKVRYSIRKVSIGILSISIGMFLALGMSNKAYA). A LysM domain is found at 175-219 (QIYTVKKGDTLSAIALKYKTTVSNIQNTNNIANPNLIFIGQKLKV). The region spanning 241–378 (NSSTLNYLKT…NYENDMIFIR (138 aa)) is the Peptidase C51 domain.

The protein localises to the secreted. Functionally, probably involved in peptidoglycan hydrolysis. This Staphylococcus aureus (strain Mu50 / ATCC 700699) protein is Probable cell wall hydrolase LytN (lytN).